We begin with the raw amino-acid sequence, 257 residues long: Ubiquinone biosynthesis O-methyltransferase (257 aa).

Positions 43, 77, 98, and 144 each coordinate S-adenosyl-L-methionine.

The protein belongs to the methyltransferase superfamily. UbiG/COQ3 family.

It catalyses the reaction a 3-demethylubiquinol + S-adenosyl-L-methionine = a ubiquinol + S-adenosyl-L-homocysteine + H(+). The catalysed reaction is a 3-(all-trans-polyprenyl)benzene-1,2-diol + S-adenosyl-L-methionine = a 2-methoxy-6-(all-trans-polyprenyl)phenol + S-adenosyl-L-homocysteine + H(+). The protein operates within cofactor biosynthesis; ubiquinone biosynthesis. Its function is as follows. O-methyltransferase that catalyzes the 2 O-methylation steps in the ubiquinone biosynthetic pathway. The polypeptide is Ubiquinone biosynthesis O-methyltransferase (Psychrobacter cryohalolentis (strain ATCC BAA-1226 / DSM 17306 / VKM B-2378 / K5)).